The sequence spans 227 residues: Cytochrome c oxidase subunit 2 (227 aa).

Residues 1-14 lie on the Mitochondrial intermembrane side of the membrane; sequence MANHSQLGFQDASS. A helical transmembrane segment spans residues 15–45; sequence PIMEELVEFHDHALMVALAICSLVLYLLTLM. The Mitochondrial matrix portion of the chain corresponds to 46-58; that stretch reads LMEKLSSNTVDAQ. Residues 59-86 form a helical membrane-spanning segment; it reads EVELIWTILPAIVLVLLALPSLQILYMM. Over 87 to 227 the chain is Mitochondrial intermembrane; it reads DEIDEPDLTL…FEAWSSLLSS (141 aa). 6 residues coordinate Cu cation: H160, C195, E197, C199, H203, and M206. E197 contacts Mg(2+).

Belongs to the cytochrome c oxidase subunit 2 family. As to quaternary structure, component of the cytochrome c oxidase (complex IV, CIV), a multisubunit enzyme composed of 14 subunits. The complex is composed of a catalytic core of 3 subunits MT-CO1, MT-CO2 and MT-CO3, encoded in the mitochondrial DNA, and 11 supernumerary subunits COX4I, COX5A, COX5B, COX6A, COX6B, COX6C, COX7A, COX7B, COX7C, COX8 and NDUFA4, which are encoded in the nuclear genome. The complex exists as a monomer or a dimer and forms supercomplexes (SCs) in the inner mitochondrial membrane with NADH-ubiquinone oxidoreductase (complex I, CI) and ubiquinol-cytochrome c oxidoreductase (cytochrome b-c1 complex, complex III, CIII), resulting in different assemblies (supercomplex SCI(1)III(2)IV(1) and megacomplex MCI(2)III(2)IV(2)). Found in a complex with TMEM177, COA6, COX18, COX20, SCO1 and SCO2. Interacts with TMEM177 in a COX20-dependent manner. Interacts with COX20. Interacts with COX16. Requires Cu cation as cofactor.

The protein localises to the mitochondrion inner membrane. It carries out the reaction 4 Fe(II)-[cytochrome c] + O2 + 8 H(+)(in) = 4 Fe(III)-[cytochrome c] + 2 H2O + 4 H(+)(out). Its function is as follows. Component of the cytochrome c oxidase, the last enzyme in the mitochondrial electron transport chain which drives oxidative phosphorylation. The respiratory chain contains 3 multisubunit complexes succinate dehydrogenase (complex II, CII), ubiquinol-cytochrome c oxidoreductase (cytochrome b-c1 complex, complex III, CIII) and cytochrome c oxidase (complex IV, CIV), that cooperate to transfer electrons derived from NADH and succinate to molecular oxygen, creating an electrochemical gradient over the inner membrane that drives transmembrane transport and the ATP synthase. Cytochrome c oxidase is the component of the respiratory chain that catalyzes the reduction of oxygen to water. Electrons originating from reduced cytochrome c in the intermembrane space (IMS) are transferred via the dinuclear copper A center (CU(A)) of subunit 2 and heme A of subunit 1 to the active site in subunit 1, a binuclear center (BNC) formed by heme A3 and copper B (CU(B)). The BNC reduces molecular oxygen to 2 water molecules using 4 electrons from cytochrome c in the IMS and 4 protons from the mitochondrial matrix. The protein is Cytochrome c oxidase subunit 2 (MT-CO2) of Gallus gallus (Chicken).